The chain runs to 276 residues: MEPGLCNRAYLLVGGLWTAISKALFAEFLATGLYVFFGVGSVLPWPVALPSVLQVAITFNLATATAVQISWKTSGAHANPAVTLAYLVGSHISLPRAVAYIAAQLAGATVGAALLYGVTPGGVRETLGVNVVHNSTSTGQAVAVELVLTLQLVLCVFASMDSRQTLGSPAAMIGTSVALGHLIGIYFTGCSMNPARSFGPAVIVGKFAVHWIFWVGPLTGAVLASLIYNFILFPDTKTVAQRLAILVGTTKVEKVVDLEPQKKESQTNSEDTEVSV.

Residues 1–22 (MEPGLCNRAYLLVGGLWTAISK) are Cytoplasmic-facing. The helical transmembrane segment at 23–43 (ALFAEFLATGLYVFFGVGSVL) threads the bilayer. The Extracellular segment spans residues 44 to 51 (PWPVALPS). The chain crosses the membrane as a helical span at residues 52-70 (VLQVAITFNLATATAVQIS). Residues 71–75 (WKTSG) lie on the Cytoplasmic side of the membrane. Residues 76–85 (AHANPAVTLA) constitute an intramembrane region (discontinuously helical). An NPA 1 motif is present at residues 79–81 (NPA). Topologically, residues 86-96 (YLVGSHISLPR) are cytoplasmic. Residues 97–118 (AVAYIAAQLAGATVGAALLYGV) traverse the membrane as a helical segment. Residues 119–138 (TPGGVRETLGVNVVHNSTST) are Extracellular-facing. Asn-134 carries an N-linked (GlcNAc...) asparagine glycan. Residues 139–159 (GQAVAVELVLTLQLVLCVFAS) traverse the membrane as a helical segment. Residues 160–165 (MDSRQT) lie on the Cytoplasmic side of the membrane. The chain crosses the membrane as a helical span at residues 166-185 (LGSPAAMIGTSVALGHLIGI). Residues 186-189 (YFTG) lie on the Extracellular side of the membrane. An intramembrane region (discontinuously helical) is located at residues 190-202 (CSMNPARSFGPAV). Residues 193–195 (NPA) carry the NPA 2 motif. Over 203–210 (IVGKFAVH) the chain is Extracellular. The helical transmembrane segment at 211-231 (WIFWVGPLTGAVLASLIYNFI) threads the bilayer. Residues 232–276 (LFPDTKTVAQRLAILVGTTKVEKVVDLEPQKKESQTNSEDTEVSV) lie on the Cytoplasmic side of the membrane.

It belongs to the MIP/aquaporin (TC 1.A.8) family. As to quaternary structure, homotetramer; each monomer provides an independent solute pore. Post-translationally, N-glycosylated. In terms of tissue distribution, kidney.

It is found in the cytoplasmic vesicle membrane. The enzyme catalyses nitrate(in) = nitrate(out). The catalysed reaction is iodide(out) = iodide(in). It carries out the reaction bromide(in) = bromide(out). It catalyses the reaction chloride(in) = chloride(out). The enzyme catalyses Na(+)(in) = Na(+)(out). The catalysed reaction is H2O(in) = H2O(out). It carries out the reaction CO2(out) = CO2(in). It catalyses the reaction NH4(+)(in) = NH4(+)(out). Activated by mercury and pH-gated, anion permeability is observed at pH 5.5 and increases markedly at pH 4.0. Selectivity for chloride increases at low pH. The water channel activity is stimulated by mercury by opposition to other aquaporins. In terms of biological role, aquaporins form homotetrameric transmembrane channels, with each monomer independently mediating water transport across the plasma membrane along its osmotic gradient. Unlike classical aquaporins, AQP6 is an intracellular channel with selective anion permeability, particularly for nitrate, and exhibits very low water permeability. It may also facilitate the transport of gases, such as CO2 and NH4(+), as demonstrated in vitro. This is Aquaporin-6 from Rattus norvegicus (Rat).